A 286-amino-acid chain; its full sequence is Probable endonuclease 4 (286 aa).

Zn(2+) is bound by residues His67, His107, Glu146, Asp180, His183, His217, Asp230, His232, and Glu262.

It belongs to the AP endonuclease 2 family. Zn(2+) is required as a cofactor.

The catalysed reaction is Endonucleolytic cleavage to 5'-phosphooligonucleotide end-products.. Its function is as follows. Endonuclease IV plays a role in DNA repair. It cleaves phosphodiester bonds at apurinic or apyrimidinic (AP) sites, generating a 3'-hydroxyl group and a 5'-terminal sugar phosphate. This is Probable endonuclease 4 from Methanosphaerula palustris (strain ATCC BAA-1556 / DSM 19958 / E1-9c).